The following is a 530-amino-acid chain: MSLLNCENSCGSSQSSSDCCAAMAASCSAAVKDDSVSGSASTGNLSSSFMEEIQGYDVEFDPPLESKYECPICLMALREAVQTPCGHRFCKACIIKSIRDAGHKCPVDNEILLENQLFPDNFAKREILSLTVKCPNKGCLQKMELRHLEDHQVHCEFALVNCPQCQRPFQKCQVNTHIIEDCPRRQVSCVNCAVSMAYEEKEIHDQSCPLANIICEYCGTILIREQMPNHYDLDCPTAPIPCTFSVFGCHEKMQRNHLARHLQENTQLHMRLLAQAVHNVNLALRPCDAASPSRGCRPEDPNYEETIKQLESRLVRQDHQIRELTAKMETQSMYVGELKRTIRTLEDKVAEMEAQQCNGIYIWKIGNFGMHLKSQEEERPVVIHSPGFYTGRPGYKLCMRLHLQLPTAQRCANYISLFVHTMQGEYDSHLPWPFQGTIRLTILDQSEALIRQNHEEVMDAKPELLAFQRPTIPRNPKGFGYVTFMHLEALRQGTFIKDDTLLVRCEVSTRFDMGGLRKEGFQPRSTDAGV.

Positions 1–362 (MSLLNCENSC…EAQQCNGIYI (362 aa)) are interaction with TAX1BP1. The RING-type zinc finger occupies 70–109 (CPICLMALREAVQTPCGHRFCKACIIKSIRDAGHKCPVDN). Lysine 124 participates in a covalent cross-link: Glycyl lysine isopeptide (Lys-Gly) (interchain with G-Cter in SUMO); alternate. A Glycyl lysine isopeptide (Lys-Gly) (interchain with G-Cter in ubiquitin); alternate cross-link involves residue lysine 124. Lysine 142 participates in a covalent cross-link: Glycyl lysine isopeptide (Lys-Gly) (interchain with G-Cter in SUMO). 2 TRAF-type zinc fingers span residues 150–202 (DHQV…EEKE) and 203–259 (IHDQ…NHLA). Residues 299–356 (EDPNYEETIKQLESRLVRQDHQIRELTAKMETQSMYVGELKRTIRTLEDKVAEMEAQQ) are a coiled coil. Residue lysine 327 forms a Glycyl lysine isopeptide (Lys-Gly) (interchain with G-Cter in ubiquitin) linkage. Residues 358–507 (NGIYIWKIGN…DDTLLVRCEV (150 aa)) form the MATH domain. Residues 363–530 (WKIGNFGMHL…FQPRSTDAGV (168 aa)) are interaction with TANK. Residue lysine 461 forms a Glycyl lysine isopeptide (Lys-Gly) (interchain with G-Cter in SUMO) linkage.

It belongs to the TNF receptor-associated factor family. A subfamily. Homotrimer. Homooligomer. N-terminal region is dimeric while C-terminal region is trimeric; maybe providing a mode of oligomerization. Upon IL1B treatment, forms a complex with PELI1, IRAK1, IRAK4 and MYD88; this complex recruits MAP3K7/TAK1, TAB1 and TAB2 to mediate NF-kappa-B activation. Direct binding of SMAD6 to PELI1 prevents the complex formation and hence negatively regulates IL1R-TLR signaling and eventually NF-kappa-B-mediated gene expression. Binds to TNFRSF5/CD40 and TNFRSF11A/RANK. Associates with NGFR, TNFRSF17, IRAK2, IRAK3, PELI2, PELI3, RIPK2, MAP3K1, MAP3K5, MAP3K14, CSK, TRAF, TRAF-interacting protein TRIP and TNF receptor associated protein TDP2. Binds UBE2V1. Interacts with MAVS/IPS1. Interacts with TAX1BP1; this interaction mediates deubiquitination of TRAF6 and inhibition of NF-kappa-B activation. Interacts with IL17R. Interacts with SQSTM1 bridging NTRK1 and NGFR. Forms a ternary complex with SQSTM1 and PRKCZ. Interacts with IL1RL1. Interacts with AJUBA. Interacts with TRAFD1. Interacts with TICAM2. Interacts with ZFAND5. Interacts with ARRB1 and ARRB2. Interacts with MAP3K7 and TAB1/MAP3K7IP1; during IL-1 signaling. Interacts with UBE2N. Interacts with TGFBR1, HDAC1 and RANGAP1. Interacts with AKT1, AKT2 and AKT3. Interacts (via TRAF domains) with NUMBL (via C-terminal). Interacts (via TRAF domains) with DYNC2I2 (via WD domains). Interacts with RBCK1. Interacts with LIMD1 (via LIM domains). Interacts with RSAD2/viperin. Interacts with IFIT3 (via N-terminus). Interacts (via C-terminus) with EIF2AK2/PKR (via the kinase catalytic domain). Interacts with CARD14. Interacts with CD40 and MAP3K8; the interaction is required for ERK activation. Interacts with TICAM1 and this interaction is enhanced in the presence of WDFY1. Interacts with TANK; this interaction increases in response to DNA damage. Interacts with USP10; this interaction increases in response to DNA damage. Interacts with ZC3H12A; this interaction increases in response to DNA damage and is stimulated by TANK. Interacts with WDFY3. Interacts with TRIM13. Interacts with GPS2. Interacts (via C-terminus) with SASH1. Interacts with LRRC19. Interacts with IL17RA and TRAF3IP2. Interacts with TOMM70. Interacts with AMBRA1; interaction is required to mediate 'Lys-63'-linked ubiquitination of ULK1. Interacts with CRBN; this interaction inhibits TLR4-mediated signaling by preventing TRAF6-mediated ubiquitination of ECSIT. As to quaternary structure, (Microbial infection) Interacts (via N-terminal RING domain) with Toxoplasma gondii GRA7; the interaction plays a role in GRA7-induced pro-inflammatory cytokine production in mouse macrophages. Post-translationally, sumoylated on Lys-124, Lys-142 and Lys-461 with SUMO1. In terms of processing, polyubiquitinated on Lys-124 by TRAF3IP2; after cell stimulation with IL17A. Polyubiquitinated; after cell stimulation with IL1B or TGFB. This ligand-induced cell stimulation leads to dimerization/oligomerization of TRAF6 molecules, followed by auto-ubiquitination which involves UBE2N and UBE2V1 and leads to TRAF6 activation. This 'Lys-63' site-specific poly-ubiquitination appears to be associated with the activation of signaling molecules. Endogenous autoubiquitination occurs only for the cytoplasmic form. Deubiquitinated by USP10 in a TANK-dependent manner, leading to the negative regulation of NF-kappa-B signaling upon DNA damage. LRRC19 induces 'Lys-63' ubiquitination. Ubiquitinated at Lys-327 by the SCF(FBXL2) complex, leading to its degradation by the proteasome. In terms of tissue distribution, highly expressed in brain, lung, liver, skeletal muscle, and kidney; lower expression in heart, spleen, and testis.

It is found in the cytoplasm. Its subcellular location is the cell cortex. The protein resides in the nucleus. The protein localises to the lipid droplet. The enzyme catalyses S-ubiquitinyl-[E2 ubiquitin-conjugating enzyme]-L-cysteine + [acceptor protein]-L-lysine = [E2 ubiquitin-conjugating enzyme]-L-cysteine + N(6)-ubiquitinyl-[acceptor protein]-L-lysine.. It participates in protein modification; protein ubiquitination. Its function is as follows. E3 ubiquitin ligase that, together with UBE2N and UBE2V1, mediates the synthesis of 'Lys-63'-linked-polyubiquitin chains conjugated to proteins, such as ECSIT, IKBKG, IRAK1, AKT1 and AKT2. Also mediates ubiquitination of free/unanchored polyubiquitin chain that leads to MAP3K7 activation. Leads to the activation of NF-kappa-B and JUN. Seems to also play a role in dendritic cells (DCs) maturation and/or activation. Represses c-Myb-mediated transactivation, in B-lymphocytes. Adapter protein that seems to play a role in signal transduction initiated via TNF receptor, IL-1 receptor and IL-17 receptor. Regulates osteoclast differentiation by mediating the activation of adapter protein complex 1 (AP-1) and NF-kappa-B, in response to RANK-L stimulation. Together with MAP3K8, mediates CD40 signals that activate ERK in B-cells and macrophages, and thus may play a role in the regulation of immunoglobulin production. Acts as a regulator of the JNK and NF-kappa-B signaling pathways by initiating assembly of heterotypic 'Lys-63'-/'Lys-48'-linked branched ubiquitin chains that are then recognized by TAB2: TRAF6 catalyzes initial 'Lys-63'-linked-polyubiquitin chains that are then branched via 'Lys-48'-linked polyubiquitin by HUWE1. 'Lys-63'-/'Lys-48'-linked branched ubiquitin chains protect 'Lys-63'-linkages from CYLD deubiquitination. Also participates in the TCR signaling by ubiquitinating LAT. The polypeptide is TNF receptor-associated factor 6 (Traf6) (Mus musculus (Mouse)).